The following is a 592-amino-acid chain: MKVVDKIKSVTEQGQTAFSFEFFPPKTEDGVENLFERMDRLVSYGPTFCDITWGAGGSTADLTLEIASRMQNVICVETMMHLTCTNMPIEKIDHALETIRSNGIQNVLALRGDPPHGQDKFVQVEGGFACALDLVNHIRSKYGDYFGITVAGYPEAHPDVIEADGLATPESYQSDLAYLKKKVDAGADLIVTQLFYDTDIFLKFVNDCRQIGINCPIVPGIMPISNYKGFLRMAGFCKTKIPAELTAALEPIKDNDEAVKAYGIHFATEMCKKILAHGITSLHLYTLNVDKSAIGILMNLGLIDESKISRSLPWRRPANVFRTKEDVRPIFWANRPKSYISRTKGWNDFPHGRWGDSHSAAYSTLSDYQFARPKGRDKKLQQEWVVPLKSIEDVQEKFKELCIGNLKSSPWSELDGLQPETKIINEQLGKINSNGFLTINSQPSVNAAKSDSPAIGWGGPGGYVYQKAYLEFFCSKDKLDTLVEKSKAFPSITYMAVNKSENWVSNTGESDVNAVTWGVFPAKEVIQPTIVDPASFKVWKDEAFEIWSRSWANLYPEDDPSRKLLEEVKNSYYLVSLVDNNYINGDIFSVFA.

E21 functions as the Proton donor/acceptor in the catalytic mechanism. NAD(+) is bound by residues 21–26 and 52–53; these read EFFPPK and TW. Residues 52-53, H81, 111-113, Y153, 157-160, D175, and K182 contribute to the FAD site; these read TW, RGD, and HPDV. D113 is a substrate binding site. Substrate contacts are provided by Q193 and Y285.

The protein belongs to the methylenetetrahydrofolate reductase family. In terms of assembly, homodimer. It depends on FAD as a cofactor.

The catalysed reaction is (6S)-5-methyl-5,6,7,8-tetrahydrofolate + NAD(+) = (6R)-5,10-methylene-5,6,7,8-tetrahydrofolate + NADH + H(+). The protein operates within one-carbon metabolism; tetrahydrofolate interconversion. Its activity is regulated as follows. Plant MTHFRs strongly prefer NADH over NADPH. Not inhibited by methionine or S-adenosylmethionine. The probable reversibility of the MTHFR reaction in plants suggests that they can metabolize the methyl group of 5,10-methylenetetrahydrofolate to serine, sugars and starch. The protein is Methylenetetrahydrofolate reductase (NADH) 1 (MTHFR1) of Arabidopsis thaliana (Mouse-ear cress).